Reading from the N-terminus, the 726-residue chain is Dipeptidyl-peptidase 5 (726 aa).

The signal sequence occupies residues Met-1–Ala-19. Asn-96 and Asn-252 each carry an N-linked (GlcNAc...) asparagine glycan. The segment at Ala-269–Pro-291 is disordered. Ser-558 serves as the catalytic Charge relay system. N-linked (GlcNAc...) asparagine glycosylation is found at Asn-605 and Asn-638. Active-site charge relay system residues include Asp-641 and His-673. Asn-699 carries N-linked (GlcNAc...) asparagine glycosylation.

It belongs to the peptidase S9C family.

The protein localises to the secreted. This chain is Dipeptidyl-peptidase 5 (DPPV), found in Trichophyton schoenleinii.